Here is a 150-residue protein sequence, read N- to C-terminus: D-aminoacyl-tRNA deacylase (150 aa).

The Gly-cisPro motif, important for rejection of L-amino acids motif lies at 136–137 (GP).

This sequence belongs to the DTD family. In terms of assembly, homodimer.

Its subcellular location is the cytoplasm. It carries out the reaction glycyl-tRNA(Ala) + H2O = tRNA(Ala) + glycine + H(+). It catalyses the reaction a D-aminoacyl-tRNA + H2O = a tRNA + a D-alpha-amino acid + H(+). An aminoacyl-tRNA editing enzyme that deacylates mischarged D-aminoacyl-tRNAs. Also deacylates mischarged glycyl-tRNA(Ala), protecting cells against glycine mischarging by AlaRS. Acts via tRNA-based rather than protein-based catalysis; rejects L-amino acids rather than detecting D-amino acids in the active site. By recycling D-aminoacyl-tRNA to D-amino acids and free tRNA molecules, this enzyme counteracts the toxicity associated with the formation of D-aminoacyl-tRNA entities in vivo and helps enforce protein L-homochirality. This chain is D-aminoacyl-tRNA deacylase, found in Staphylococcus epidermidis (strain ATCC 35984 / DSM 28319 / BCRC 17069 / CCUG 31568 / BM 3577 / RP62A).